A 306-amino-acid chain; its full sequence is Non-structural protein 3 (306 aa).

This chain is Non-structural protein 3 (Segment-7), found in Banna virus (BAV).